A 144-amino-acid chain; its full sequence is uncharacterized protein (144 aa).

A signal peptide spans 1–16 (MRKFLIVLLLPLLVLA).

This is an uncharacterized protein from Aquifex aeolicus (strain VF5).